The chain runs to 331 residues: Inner membrane ABC transporter permease protein YjfF (331 aa).

At 1–5 (MIKRN) the chain is on the cytoplasmic side. The chain crosses the membrane as a helical span at residues 6 to 26 (LPLMITIGVFVLGYLYCLTQF). At 27–42 (PGFASTRVICNILTDN) the chain is on the periplasmic side. A helical membrane pass occupies residues 43 to 63 (AFLGIIAVGMTFVILSGGIDL). The Cytoplasmic portion of the chain corresponds to 64–88 (SVGSVIAFTGVFLAKVIGDFGLSPL). Residues 89–109 (LAFPLVLVMGCAFGAFMGLLI) form a helical membrane-spanning segment. Topologically, residues 110–113 (DALK) are periplasmic. The chain crosses the membrane as a helical span at residues 114–134 (IPAFIITLAGMFFLRGVSYLV). Topologically, residues 135–159 (SEESIPINHPIYDTLSSLAWKIPGG) are cytoplasmic. The helical transmembrane segment at 160–180 (GRLSAMGLLMLAVVVIGIFLA) threads the bilayer. Residues 181-222 (HRTRFGNQVYAIGGNATSANLMGISTRSTTIRIYMLSTGLAT) are Periplasmic-facing. Residues 223–243 (LAGIVFSIYTQAGYALAGVGV) traverse the membrane as a helical segment. Residues 244-250 (ELDAIAS) lie on the Cytoplasmic side of the membrane. Residues 251-271 (VVIGGTLLSGGVGTVLGTLFG) traverse the membrane as a helical segment. The Periplasmic portion of the chain corresponds to 272–294 (VAIQGLIQTYINFDGTLSSWWTK). Residues 295-315 (IAIGILLFIFIALQRGLTVLW) form a helical membrane-spanning segment. Topologically, residues 316 to 331 (ENRQSSPVTRVNIAQQ) are cytoplasmic.

Belongs to the binding-protein-dependent transport system permease family. AraH/RbsC subfamily. The complex is composed of two ATP-binding proteins (YtfR), two transmembrane proteins (YtfT and YjfF) and a solute-binding protein (YtfQ).

Its subcellular location is the cell inner membrane. Its function is as follows. Part of the ABC transporter complex YtfQRT-YjfF involved in galactofuranose transport. Probably responsible for the translocation of the substrate across the membrane. The protein is Inner membrane ABC transporter permease protein YjfF (yjfF) of Escherichia coli (strain K12).